The primary structure comprises 362 residues: Sterol-4-alpha-carboxylate 3-dehydrogenase, decarboxylating (362 aa).

The residue at position 1 (methionine 1) is an N-acetylmethionine. Tyrosine 161 acts as the Proton acceptor in catalysis. Lysine 165 serves as a coordination point for NAD(+). A helical transmembrane segment spans residues 287–307 (WMAYYLAFLLSLLVMVVSPLI). Residues 359–362 (RKDK) carry the Prevents secretion from ER motif.

Belongs to the 3-beta-HSD family. Homodimer.

It localises to the endoplasmic reticulum membrane. Its subcellular location is the lipid droplet. The enzyme catalyses a 3beta-hydroxysteroid-4alpha-carboxylate + NADP(+) = a 3-oxosteroid + CO2 + NADPH. It carries out the reaction a 3beta-hydroxysteroid-4alpha-carboxylate + NAD(+) = a 3-oxosteroid + CO2 + NADH. The catalysed reaction is 4alpha-carboxyzymosterol + NADP(+) = zymosterone + CO2 + NADPH. It catalyses the reaction 4alpha-carboxy-4beta-methyl-5alpha-cholest-8-en-3beta-ol + NADP(+) = 4alpha-methyl-5alpha-cholest-8-en-3-one + CO2 + NADPH. The enzyme catalyses 4alpha-carboxy-5alpha-cholest-8-ene-3beta-ol + NADP(+) = 5alpha-cholest-8-en-3-one + CO2 + NADPH. It carries out the reaction 4beta-methylzymosterol-4alpha-carboxylate + NADP(+) = 3-dehydro-4-methylzymosterol + CO2 + NADPH. The catalysed reaction is 4beta-methylzymosterol-4alpha-carboxylate + NAD(+) = 3-dehydro-4-methylzymosterol + CO2 + NADH. It catalyses the reaction 4alpha-carboxy-5alpha-cholest-8-ene-3beta-ol + NAD(+) = 5alpha-cholest-8-en-3-one + CO2 + NADH. The enzyme catalyses 4alpha-carboxy-4beta-methyl-5alpha-cholest-8-en-3beta-ol + NAD(+) = 4alpha-methyl-5alpha-cholest-8-en-3-one + CO2 + NADH. It carries out the reaction 4alpha-carboxyzymosterol + NAD(+) = zymosterone + CO2 + NADH. Its pathway is steroid biosynthesis; zymosterol biosynthesis; zymosterol from lanosterol: step 4/6. In terms of biological role, catalyzes the NAD(P)(+)-dependent oxidative decarboxylation of the C4 methyl groups of 4-alpha-carboxysterols in post-squalene cholesterol biosynthesis. Plays a role in the regulation of the endocytic trafficking of EGFR. This is Sterol-4-alpha-carboxylate 3-dehydrogenase, decarboxylating (Nsdhl) from Mus musculus (Mouse).